The chain runs to 205 residues: LIM domain-containing protein PLIM2b (205 aa).

LIM zinc-binding domains follow at residues 8-68 (DKCN…LFKE) and 102-162 (DKCA…LFME). The segment at 177-205 (RTASGNTLPPEPTEDVAVEAKEENGVSES) is disordered. Basic and acidic residues predominate over residues 194–205 (VEAKEENGVSES).

As to quaternary structure, interacts with F-actin. Predominantly expressed in flowers and in pollen grains. Detected in vasculature and roots.

It localises to the cytoplasm. It is found in the cytoskeleton. In terms of biological role, binds to actin filaments and promotes cross-linking into thick bundles. Has an actin-stabilizing activity. The actin regulatory activities are inhibited by pH &gt; 6.8 but are [Ca(2+)] independent. The protein is LIM domain-containing protein PLIM2b of Arabidopsis thaliana (Mouse-ear cress).